The sequence spans 1142 residues: Serine/threonine-protein kinase GIN4 (1142 aa).

In terms of domain architecture, Protein kinase spans 19–289 (WKLGETLGLG…TRDILKHPLL (271 aa)). Residues 25-33 (LGLGSTGKV) and Lys48 each bind ATP. Asp156 functions as the Proton acceptor in the catalytic mechanism. 2 disordered regions span residues 378–412 (KKRQ…SVTS) and 425–469 (ASSA…RNKR). Positions 382–395 (SISSVSVSPSKKVS) are enriched in low complexity. Position 406 is a phosphoserine (Ser406). Low complexity predominate over residues 425–440 (ASSASSSNLTTPGSSK). The segment covering 441-452 (RLSKNFSSKKKL) has biased composition (basic residues). Positions 454-465 (TIVNQSSPTPAS) are enriched in polar residues. Ser465, Ser471, Ser617, Ser689, Ser719, Ser805, Ser807, and Ser883 each carry phosphoserine. A disordered region spans residues 676-698 (DPGIMFSSPTEEVSPVEPKRTEN). A Phosphothreonine modification is found at Thr884. Residues 903–1031 (NEAKQTDNLH…NTAIGNGSFF (129 aa)) form a disordered region. Basic and acidic residues-rich tracts occupy residues 923–937 (NELR…DQAH), 962–984 (KEEK…KVVD), and 996–1021 (KIRE…KQDK). A Phosphoserine modification is found at Ser930.

It belongs to the protein kinase superfamily. CAMK Ser/Thr protein kinase family. NIM1 subfamily. In terms of assembly, component of the GIN4 complex composed of at least BNI5, CDC3, CDC10, CDC11, CDC12, GIN4, NAP1 and SHS1 which forms a ring at the bud neck.

Its subcellular location is the cytoplasm. The protein resides in the bud neck. It carries out the reaction L-seryl-[protein] + ATP = O-phospho-L-seryl-[protein] + ADP + H(+). The catalysed reaction is L-threonyl-[protein] + ATP = O-phospho-L-threonyl-[protein] + ADP + H(+). In terms of biological role, serine/threonine-protein kinase which regulates the localization and the function of the septins during mitosis. Phosphorylates SHS1. This chain is Serine/threonine-protein kinase GIN4 (GIN4), found in Saccharomyces cerevisiae (strain ATCC 204508 / S288c) (Baker's yeast).